Reading from the N-terminus, the 315-residue chain is tRNA dimethylallyltransferase (315 aa).

Residue 14 to 21 (GPTASGKT) coordinates ATP. 16–21 (TASGKT) serves as a coordination point for substrate. Interaction with substrate tRNA regions lie at residues 39–42 (DSAL), 163–167 (QRIQR), and 248–253 (RCVGYR).

Belongs to the IPP transferase family. As to quaternary structure, monomer. Requires Mg(2+) as cofactor.

The enzyme catalyses adenosine(37) in tRNA + dimethylallyl diphosphate = N(6)-dimethylallyladenosine(37) in tRNA + diphosphate. Catalyzes the transfer of a dimethylallyl group onto the adenine at position 37 in tRNAs that read codons beginning with uridine, leading to the formation of N6-(dimethylallyl)adenosine (i(6)A). The sequence is that of tRNA dimethylallyltransferase from Paraburkholderia phytofirmans (strain DSM 17436 / LMG 22146 / PsJN) (Burkholderia phytofirmans).